The primary structure comprises 431 residues: Enolase (431 aa).

Q163 provides a ligand contact to (2R)-2-phosphoglycerate. E205 acts as the Proton donor in catalysis. Mg(2+) is bound by residues D242, E288, and D315. (2R)-2-phosphoglycerate is bound by residues K340, R369, S370, and K391. The active-site Proton acceptor is K340.

Belongs to the enolase family. The cofactor is Mg(2+).

The protein localises to the cytoplasm. Its subcellular location is the secreted. It is found in the cell surface. It catalyses the reaction (2R)-2-phosphoglycerate = phosphoenolpyruvate + H2O. It functions in the pathway carbohydrate degradation; glycolysis; pyruvate from D-glyceraldehyde 3-phosphate: step 4/5. In terms of biological role, catalyzes the reversible conversion of 2-phosphoglycerate (2-PG) into phosphoenolpyruvate (PEP). It is essential for the degradation of carbohydrates via glycolysis. This Bacillus cereus (strain AH187) protein is Enolase.